Reading from the N-terminus, the 1222-residue chain is ATP-dependent helicase/nuclease subunit A (1222 aa).

The 457-residue stretch at 39-495 (QKRTAQQIEA…ILLKENFRSQ (457 aa)) folds into the UvrD-like helicase ATP-binding domain. 60 to 67 (ASAGSGKT) provides a ligand contact to ATP. One can recognise a UvrD-like helicase C-terminal domain in the interval 524–810 (QLIAGSHAQT…NLMTIHKSKG (287 aa)).

It belongs to the helicase family. AddA subfamily. As to quaternary structure, heterodimer of AddA and AddB/RexB. The cofactor is Mg(2+).

The enzyme catalyses Couples ATP hydrolysis with the unwinding of duplex DNA by translocating in the 3'-5' direction.. The catalysed reaction is ATP + H2O = ADP + phosphate + H(+). Functionally, the heterodimer acts as both an ATP-dependent DNA helicase and an ATP-dependent, dual-direction single-stranded exonuclease. Recognizes the chi site generating a DNA molecule suitable for the initiation of homologous recombination. The AddA nuclease domain is required for chi fragment generation; this subunit has the helicase and 3' -&gt; 5' nuclease activities. This is ATP-dependent helicase/nuclease subunit A from Streptococcus pyogenes serotype M4 (strain MGAS10750).